The chain runs to 226 residues: MTDSTAIALLSGGLDSATAAALAIKSGFRVIGLSFDYGQRHRRELDAAVEIAKALNLAEHHTINVDLAMWGGSSLTDHAQTLPTSGVETSIIPNTYVPGRNTVFIAIGLSLAEARGADRLVLGVNAVDYSGYPDCRPDYLEAFQDLADLSSRAGREGHGPKLWAPLVEWSKQQIAEEALHLGIPIERTWSCYSGGDVPCGVCDSCRIRDEALLAAGRPDLCSPGRP.

ATP is bound at residue 10-20 (LSGGLDSATAA). Residues Cys191, Cys199, Cys202, and Cys205 each contribute to the Zn(2+) site.

This sequence belongs to the QueC family. Requires Zn(2+) as cofactor.

The catalysed reaction is 7-carboxy-7-deazaguanine + NH4(+) + ATP = 7-cyano-7-deazaguanine + ADP + phosphate + H2O + H(+). The protein operates within purine metabolism; 7-cyano-7-deazaguanine biosynthesis. In terms of biological role, catalyzes the ATP-dependent conversion of 7-carboxy-7-deazaguanine (CDG) to 7-cyano-7-deazaguanine (preQ(0)). In Synechococcus sp. (strain CC9311), this protein is 7-cyano-7-deazaguanine synthase.